Consider the following 499-residue polypeptide: Glycerol kinase (499 aa).

An ADP-binding site is contributed by threonine 13. Threonine 13, threonine 14, and serine 15 together coordinate ATP. A sn-glycerol 3-phosphate-binding site is contributed by threonine 13. Arginine 17 serves as a coordination point for ADP. Arginine 83, glutamate 84, tyrosine 136, and aspartate 246 together coordinate sn-glycerol 3-phosphate. Glycerol-binding residues include arginine 83, glutamate 84, tyrosine 136, aspartate 246, and glutamine 247. ADP contacts are provided by threonine 268 and glycine 311. ATP is bound by residues threonine 268, glycine 311, glutamine 315, and glycine 412. ADP is bound by residues glycine 412 and asparagine 416.

The protein belongs to the FGGY kinase family.

It catalyses the reaction glycerol + ATP = sn-glycerol 3-phosphate + ADP + H(+). It participates in polyol metabolism; glycerol degradation via glycerol kinase pathway; sn-glycerol 3-phosphate from glycerol: step 1/1. With respect to regulation, inhibited by fructose 1,6-bisphosphate (FBP). In terms of biological role, key enzyme in the regulation of glycerol uptake and metabolism. Catalyzes the phosphorylation of glycerol to yield sn-glycerol 3-phosphate. The polypeptide is Glycerol kinase (Francisella philomiragia subsp. philomiragia (strain ATCC 25017 / CCUG 19701 / FSC 153 / O#319-036)).